The primary structure comprises 492 residues: Probable glycine dehydrogenase (decarboxylating) subunit 2 (492 aa).

The residue at position 274 (lysine 274) is an N6-(pyridoxal phosphate)lysine.

This sequence belongs to the GcvP family. C-terminal subunit subfamily. The glycine cleavage system is composed of four proteins: P, T, L and H. In this organism, the P 'protein' is a heterodimer of two subunits. Pyridoxal 5'-phosphate serves as cofactor.

The catalysed reaction is N(6)-[(R)-lipoyl]-L-lysyl-[glycine-cleavage complex H protein] + glycine + H(+) = N(6)-[(R)-S(8)-aminomethyldihydrolipoyl]-L-lysyl-[glycine-cleavage complex H protein] + CO2. In terms of biological role, the glycine cleavage system catalyzes the degradation of glycine. The P protein binds the alpha-amino group of glycine through its pyridoxal phosphate cofactor; CO(2) is released and the remaining methylamine moiety is then transferred to the lipoamide cofactor of the H protein. The protein is Probable glycine dehydrogenase (decarboxylating) subunit 2 of Staphylococcus haemolyticus (strain JCSC1435).